The sequence spans 343 residues: NADH-cytochrome b5 reductase 2 (343 aa).

A helical transmembrane segment spans residues 41–61; it reads ILLGAAAVGLAGAGAYFFSGA. An FAD-binding FR-type domain is found at 92–197; the sequence is QGWLSLKLEE…KGPLPKYPWE (106 aa). An FAD-binding site is contributed by 200–235; the sequence is KHKHIALVAGGTGITPMYQLIRAIFNNPDDKTKVTL.

The protein belongs to the flavoprotein pyridine nucleotide cytochrome reductase family. The cofactor is FAD.

It localises to the mitochondrion outer membrane. The catalysed reaction is 2 Fe(III)-[cytochrome b5] + NADH = 2 Fe(II)-[cytochrome b5] + NAD(+) + H(+). Its function is as follows. May mediate the reduction of outer membrane cytochrome b5. The protein is NADH-cytochrome b5 reductase 2 (mcr-1) of Neurospora crassa (strain ATCC 24698 / 74-OR23-1A / CBS 708.71 / DSM 1257 / FGSC 987).